The primary structure comprises 1138 residues: Nonsense-mediated mRNA decay factor SMG7 (1138 aa).

Ser-2 is subject to N-acetylserine. TPR repeat units follow at residues 152-185 (QHCL…VPSN) and 187-219 (QPYN…KFPF). Disordered stretches follow at residues 515 to 612 (ATDG…LPSR), 649 to 745 (STAH…YQQA), 838 to 871 (QPNM…KSSP), 990 to 1090 (SLPA…PSME), and 1106 to 1138 (SSMM…NPPH). The residue at position 519 (Ser-519) is a Phosphoserine. Residues 525–537 (VLSTGRNPSNSCD) are compositionally biased toward polar residues. Residues 548 to 582 (ENIKPREVNQGRSFPPKEVKSQTELRKTPVSEARK) show a composition bias toward basic and acidic residues. Thr-575 is modified (phosphothreonine). Composition is skewed to polar residues over residues 584 to 597 (PVTQ…NSQF) and 649 to 673 (STAH…SQQR). The segment covering 674-721 (PSGPGPMNQGPQQSQPPSQPPLTSLPAQPTAQSTSQLQVQALAQQQQS) has biased composition (low complexity). Residues Ser-732 and Ser-848 each carry the phosphoserine modification. The span at 854–868 (PEQDPVPRMPFEDPK) shows a compositional bias: basic and acidic residues. A compositionally biased stretch (polar residues) spans 990–999 (SLPASSDHST). Residues 1000-1026 (PASQSPHSSNPSSLPSSPPTHNHNSAP) show a composition bias toward low complexity. Basic and acidic residues predominate over residues 1037–1051 (DNRDRRPADRWKTDK). Positions 1063-1082 (SATSSSESSWHQASTPSGTW) are enriched in polar residues. The span at 1118–1132 (QLLMQQKQKQQRGQG) shows a compositional bias: low complexity.

In terms of assembly, part of a complex that contains SMG5, SMG7, PPP2CA, a short isoform of UPF3A (isoform UPF3AS, but not isoform UPF3AL) and phosphorylated UPF1. Interacts with DHX34; the interaction is RNA-independent.

The protein resides in the cytoplasm. It is found in the nucleus. Functionally, plays a role in nonsense-mediated mRNA decay. Recruits UPF1 to cytoplasmic mRNA decay bodies. Together with SMG5 is thought to provide a link to the mRNA degradation machinery involving exonucleolytic pathways, and to serve as an adapter for UPF1 to protein phosphatase 2A (PP2A), thereby triggering UPF1 dephosphorylation. The polypeptide is Nonsense-mediated mRNA decay factor SMG7 (Mus musculus (Mouse)).